A 365-amino-acid chain; its full sequence is S-adenosylmethionine:tRNA ribosyltransferase-isomerase (365 aa).

The protein belongs to the QueA family. In terms of assembly, monomer.

It localises to the cytoplasm. The enzyme catalyses 7-aminomethyl-7-carbaguanosine(34) in tRNA + S-adenosyl-L-methionine = epoxyqueuosine(34) in tRNA + adenine + L-methionine + 2 H(+). It functions in the pathway tRNA modification; tRNA-queuosine biosynthesis. Its function is as follows. Transfers and isomerizes the ribose moiety from AdoMet to the 7-aminomethyl group of 7-deazaguanine (preQ1-tRNA) to give epoxyqueuosine (oQ-tRNA). This Rickettsia rickettsii (strain Iowa) protein is S-adenosylmethionine:tRNA ribosyltransferase-isomerase.